Here is a 453-residue protein sequence, read N- to C-terminus: UDP-glycosyltransferase 79B6 (453 aa).

Residues Ser266, 325–327, 342–350, and 364–367 each bind UDP-alpha-D-glucose; these read VQQ, HCGFGSMWE, and LGEQ.

This sequence belongs to the UDP-glycosyltransferase family.

The polypeptide is UDP-glycosyltransferase 79B6 (UGT79B6) (Arabidopsis thaliana (Mouse-ear cress)).